We begin with the raw amino-acid sequence, 75 residues long: Small ribosomal subunit protein bS18 (75 aa).

Belongs to the bacterial ribosomal protein bS18 family. In terms of assembly, part of the 30S ribosomal subunit. Forms a tight heterodimer with protein bS6.

In terms of biological role, binds as a heterodimer with protein bS6 to the central domain of the 16S rRNA, where it helps stabilize the platform of the 30S subunit. The polypeptide is Small ribosomal subunit protein bS18 (Yersinia enterocolitica serotype O:8 / biotype 1B (strain NCTC 13174 / 8081)).